Consider the following 196-residue polypeptide: Adenylate kinase (196 aa).

ATP is bound at residue G9 to T17.

This sequence belongs to the archaeal adenylate kinase family.

It localises to the cytoplasm. It carries out the reaction AMP + ATP = 2 ADP. The sequence is that of Adenylate kinase from Thermococcus kodakarensis (strain ATCC BAA-918 / JCM 12380 / KOD1) (Pyrococcus kodakaraensis (strain KOD1)).